A 241-amino-acid chain; its full sequence is 3-deoxy-D-manno-octulosonic acid kinase (241 aa).

Aspartate 171 is a catalytic residue.

The protein belongs to the protein kinase superfamily. KdkA/RfaP family.

Its subcellular location is the cell inner membrane. It carries out the reaction an alpha-Kdo-(2-&gt;6)-lipid IVA + ATP = a 4-O-phospho-alpha-Kdo-(2-&gt;6)-lipid IVA + ADP + H(+). The protein operates within bacterial outer membrane biogenesis; LPS core biosynthesis. In terms of biological role, catalyzes the ATP-dependent phosphorylation of the 3-deoxy-D-manno-octulosonic acid (Kdo) residue in Kdo-lipid IV(A) at the 4-OH position. This Haemophilus influenzae (strain 86-028NP) protein is 3-deoxy-D-manno-octulosonic acid kinase.